A 199-amino-acid chain; its full sequence is Ribosome maturation factor RimM (199 aa).

Positions 93 to 169 (DDEYYHADLI…IELPDEIDGE (77 aa)) constitute a PRC barrel domain. The segment at 164–199 (DEIDGEDRASADESASAEDDAAAPNSARHPRESGDP) is disordered.

It belongs to the RimM family. In terms of assembly, binds ribosomal protein uS19.

It is found in the cytoplasm. Its function is as follows. An accessory protein needed during the final step in the assembly of 30S ribosomal subunit, possibly for assembly of the head region. Essential for efficient processing of 16S rRNA. May be needed both before and after RbfA during the maturation of 16S rRNA. It has affinity for free ribosomal 30S subunits but not for 70S ribosomes. In Bradyrhizobium sp. (strain ORS 278), this protein is Ribosome maturation factor RimM.